Consider the following 108-residue polypeptide: MVNLFPVFTLIVIITILITTRELSTTMLIVSLVTDYIIINTQYTEQQHENNTFSMPQKNSFSESYNKDKKSNTHIPYQWLAPELKEAESKYWWGNYDPHSEPVLAGAS.

The chain crosses the membrane as a helical span at residues 10-32 (LIVIITILITTRELSTTMLIVSL). Positions 49 to 64 (ENNTFSMPQKNSFSES) are enriched in polar residues. The disordered stretch occupies residues 49 to 69 (ENNTFSMPQKNSFSESYNKDK). Residue asparagine 50 is glycosylated (N-linked (GlcNAc...) asparagine; by host).

Belongs to the asfivirus H108R family.

It localises to the virion membrane. This is Inner membrane protein H108R from Ornithodoros (relapsing fever ticks).